A 122-amino-acid polypeptide reads, in one-letter code: Histone H2B.2 (122 aa).

Low complexity predominate over residues 1–10 (MAPKKAPAAT). The tract at residues 1–28 (MAPKKAPAATTEKKVKKAPTTEKKNKKK) is disordered. N,N,N-trimethylalanine is present on A2. 2 positions are modified to N6-acetyllysine: K5 and K42. Residue K116 forms a Glycyl lysine isopeptide (Lys-Gly) (interchain with G-Cter in ubiquitin) linkage.

This sequence belongs to the histone H2B family. In terms of assembly, the nucleosome is a histone octamer containing two molecules each of H2A, H2B, H3 and H4 assembled in one H3-H4 heterotetramer and two H2A-H2B heterodimers. The octamer wraps approximately 147 bp of DNA. Acetylation occurs almost exclusively in the MAC. Post-translationally, monoubiquitination to form H2BK115ub1 gives a specific tag for epigenetic transcriptional activation and is also prerequisite for H3K4me and H3K79me formation.

It is found in the nucleus. It localises to the chromosome. In terms of biological role, core component of nucleosome. Nucleosomes wrap and compact DNA into chromatin, limiting DNA accessibility to the cellular machineries which require DNA as a template. Histones thereby play a central role in transcription regulation, DNA repair, DNA replication and chromosomal stability. DNA accessibility is regulated via a complex set of post-translational modifications of histones, also called histone code, and nucleosome remodeling. This is Histone H2B.2 (HTB2) from Tetrahymena thermophila (strain SB210).